A 187-amino-acid polypeptide reads, in one-letter code: Adenine phosphoribosyltransferase (187 aa).

It belongs to the purine/pyrimidine phosphoribosyltransferase family. Homodimer.

It localises to the cytoplasm. It carries out the reaction AMP + diphosphate = 5-phospho-alpha-D-ribose 1-diphosphate + adenine. The protein operates within purine metabolism; AMP biosynthesis via salvage pathway; AMP from adenine: step 1/1. In terms of biological role, catalyzes a salvage reaction resulting in the formation of AMP, that is energically less costly than de novo synthesis. In Yersinia pestis (strain Pestoides F), this protein is Adenine phosphoribosyltransferase.